Consider the following 443-residue polypeptide: Thymidine phosphorylase (443 aa).

It belongs to the thymidine/pyrimidine-nucleoside phosphorylase family. Homodimer.

The enzyme catalyses thymidine + phosphate = 2-deoxy-alpha-D-ribose 1-phosphate + thymine. It participates in pyrimidine metabolism; dTMP biosynthesis via salvage pathway; dTMP from thymine: step 1/2. Its function is as follows. The enzymes which catalyze the reversible phosphorolysis of pyrimidine nucleosides are involved in the degradation of these compounds and in their utilization as carbon and energy sources, or in the rescue of pyrimidine bases for nucleotide synthesis. This Shewanella sp. (strain MR-4) protein is Thymidine phosphorylase.